Reading from the N-terminus, the 503-residue chain is Maturase K (503 aa).

Belongs to the intron maturase 2 family. MatK subfamily.

It localises to the plastid. The protein resides in the chloroplast. Usually encoded in the trnK tRNA gene intron. Probably assists in splicing its own and other chloroplast group II introns. This is Maturase K from Psilotum nudum (Whisk fern).